A 197-amino-acid polypeptide reads, in one-letter code: Holliday junction branch migration complex subunit RuvA (197 aa).

The tract at residues 1-64 is domain I; sequence MIGRLRGIVA…EDSVSLYGFL (64 aa). Positions 65 to 143 are domain II; it reads REGERRLFRD…QFGAGGALPT (79 aa). A flexible linker region spans residues 144-153; the sequence is GSGPAPADPL. A domain III region spans residues 153–197; the sequence is LSDATVALQQLGYKPAEAARMAREAFNEGDEVAIVIRKALQSALR.

This sequence belongs to the RuvA family. In terms of assembly, homotetramer. Forms an RuvA(8)-RuvB(12)-Holliday junction (HJ) complex. HJ DNA is sandwiched between 2 RuvA tetramers; dsDNA enters through RuvA and exits via RuvB. An RuvB hexamer assembles on each DNA strand where it exits the tetramer. Each RuvB hexamer is contacted by two RuvA subunits (via domain III) on 2 adjacent RuvB subunits; this complex drives branch migration. In the full resolvosome a probable DNA-RuvA(4)-RuvB(12)-RuvC(2) complex forms which resolves the HJ.

The protein resides in the cytoplasm. In terms of biological role, the RuvA-RuvB-RuvC complex processes Holliday junction (HJ) DNA during genetic recombination and DNA repair, while the RuvA-RuvB complex plays an important role in the rescue of blocked DNA replication forks via replication fork reversal (RFR). RuvA specifically binds to HJ cruciform DNA, conferring on it an open structure. The RuvB hexamer acts as an ATP-dependent pump, pulling dsDNA into and through the RuvAB complex. HJ branch migration allows RuvC to scan DNA until it finds its consensus sequence, where it cleaves and resolves the cruciform DNA. The chain is Holliday junction branch migration complex subunit RuvA from Stenotrophomonas maltophilia (strain R551-3).